Reading from the N-terminus, the 459-residue chain is Uterine milk protein (459 aa).

A signal peptide spans 1 to 25 (MSHGRMNLALSLVFILCGLFNSIFC). The N-linked (GlcNAc...) asparagine glycan is linked to Asn-268.

This sequence belongs to the serpin family. UTMP subfamily.

In Bos taurus (Bovine), this protein is Uterine milk protein.